The following is a 211-amino-acid chain: Arginine exporter protein ArgO (211 aa).

The next 6 membrane-spanning stretches (helical) occupy residues 1 to 21 (MFTY…PLGP), 37 to 57 (LMIA…GIFG), 68 to 88 (LLAL…FGAL), 111 to 131 (IIIT…DTFV), 147 to 167 (WFAL…ALLA), and 179 to 199 (AQRI…FQLA).

The protein belongs to the LysE/ArgO transporter (TC 2.A.75) family.

The protein localises to the cell inner membrane. It carries out the reaction L-arginine(in) = L-arginine(out). Involved in the export of arginine. Important to control the intracellular level of arginine and the correct balance between arginine and lysine. In Klebsiella pneumoniae subsp. pneumoniae (strain ATCC 700721 / MGH 78578), this protein is Arginine exporter protein ArgO.